Reading from the N-terminus, the 415-residue chain is Serine hydroxymethyltransferase (415 aa).

Residues Leu-117 and 121-123 (GHL) each bind (6S)-5,6,7,8-tetrahydrofolate. Position 226 is an N6-(pyridoxal phosphate)lysine (Lys-226). Glu-241 contributes to the (6S)-5,6,7,8-tetrahydrofolate binding site.

The protein belongs to the SHMT family. Homodimer. Pyridoxal 5'-phosphate is required as a cofactor.

It localises to the cytoplasm. The catalysed reaction is (6R)-5,10-methylene-5,6,7,8-tetrahydrofolate + glycine + H2O = (6S)-5,6,7,8-tetrahydrofolate + L-serine. The protein operates within one-carbon metabolism; tetrahydrofolate interconversion. It participates in amino-acid biosynthesis; glycine biosynthesis; glycine from L-serine: step 1/1. In terms of biological role, catalyzes the reversible interconversion of serine and glycine with tetrahydrofolate (THF) serving as the one-carbon carrier. This reaction serves as the major source of one-carbon groups required for the biosynthesis of purines, thymidylate, methionine, and other important biomolecules. Also exhibits THF-independent aldolase activity toward beta-hydroxyamino acids, producing glycine and aldehydes, via a retro-aldol mechanism. This chain is Serine hydroxymethyltransferase, found in Bacillus pumilus (strain SAFR-032).